Here is a 350-residue protein sequence, read N- to C-terminus: Phosphate acyltransferase (350 aa).

This sequence belongs to the PlsX family. In terms of assembly, homodimer. Probably interacts with PlsY.

Its subcellular location is the cytoplasm. The catalysed reaction is a fatty acyl-[ACP] + phosphate = an acyl phosphate + holo-[ACP]. The protein operates within lipid metabolism; phospholipid metabolism. Its function is as follows. Catalyzes the reversible formation of acyl-phosphate (acyl-PO(4)) from acyl-[acyl-carrier-protein] (acyl-ACP). This enzyme utilizes acyl-ACP as fatty acyl donor, but not acyl-CoA. The protein is Phosphate acyltransferase of Chelativorans sp. (strain BNC1).